Consider the following 224-residue polypeptide: Ribonuclease 3 (224 aa).

Positions 5–127 (ANRLQRRLGY…IIGAIYLDSD (123 aa)) constitute an RNase III domain. E40 is a binding site for Mg(2+). D44 is an active-site residue. Residues D113 and E116 each coordinate Mg(2+). E116 is a catalytic residue. One can recognise a DRBM domain in the interval 154-224 (DPKTRLQECL…AELALKQLES (71 aa)).

The protein belongs to the ribonuclease III family. Homodimer. Mg(2+) is required as a cofactor.

Its subcellular location is the cytoplasm. The catalysed reaction is Endonucleolytic cleavage to 5'-phosphomonoester.. Functionally, digests double-stranded RNA. Involved in the processing of primary rRNA transcript to yield the immediate precursors to the large and small rRNAs (23S and 16S). Processes some mRNAs, and tRNAs when they are encoded in the rRNA operon. Processes pre-crRNA and tracrRNA of type II CRISPR loci if present in the organism. This is Ribonuclease 3 from Photobacterium profundum (strain SS9).